Reading from the N-terminus, the 240-residue chain is Large ribosomal subunit protein uL3 (240 aa).

2 disordered regions span residues 139–164 (VSHR…KMPG) and 215–240 (DAPK…QEGV). Position 151 is an N5-methylglutamine (Q151). Positions 225 to 240 (ADGGEQAAPAAEQEGV) are enriched in low complexity.

This sequence belongs to the universal ribosomal protein uL3 family. Part of the 50S ribosomal subunit. Forms a cluster with proteins L14 and L19. Methylated by PrmB.

One of the primary rRNA binding proteins, it binds directly near the 3'-end of the 23S rRNA, where it nucleates assembly of the 50S subunit. In Rhodopseudomonas palustris (strain BisA53), this protein is Large ribosomal subunit protein uL3.